The sequence spans 880 residues: MIYTSNEICQMFLNFFYKKGHTILPGSTLIPNNDPSLLFTNSGMNQFKDIFIQKNYNFKYNRVTTLQNCLRTGGKHNDFENVGYTPQHHTFFQMLGNFSFRDYFKLDAILYAWKFLTSKEQLNLSKEKLWITVYQDDLESYNIWKNIIKIDKHKIIKIGNKYNSSDSDNFWQMGEIGPCGPCTEIFYDYGNTLPGTIPGNNGCNVPRFVEIWNIVFIQFNKLSNGKLIKLTESYVDTGMGLERISAVINNVTSNYEIDLFKPLIKHILELSTVNTPKNKSIYVIADHIRACSFIISENIIPSNEKHGYVLRRIIRRAIRHGHNLGIKSLFLHKLIPTLINTMGKFNPVLKKQQNKIENVLKLEEQKFIETLEKGLKLLHKELKQIQPKHVLSGKLAFNLYDTFGFPIDLTIDICKEHNISINIMEFKRYLNQHKQNSINKNFLNTRNAYYIEDNNINIKTHFVGYQFNKTQSIINNIIIKNNKKTLQINDYQNSILFLNETPFYGESGGQIGDSGIIHNKTGKFIVNCTKMFGNIIGHVGTLASGYLNIHDTVCAEINLPKRKSIQINHTATHLLHASLRKILGKHVFQKGSFISDQSLKFDFSHNAPMNLREIQEVENIINKKIQKNISVSTTLTTLQEIQNKKVMALFQDKYKDKVRMISINDFSVELCGGTHTKYTGDIGLFKITSEISISSGIRRIEAVTGKHAISIIHHQEKTINNIANMLNSKTNNIEQTITKLLNNNIHLKKQIYTLYNQNIYNIVNSLSKHNILIKDVNIIIKNLKNENLLSLRNIVDKLKNRFKCSVIIISSIINNKSIIIVGVTRNVTDRISALDILNKLTKKLGGRGGGKNNIAEGGIKNLISLPIELKKIKTWISSRL.

Residues His-569, His-573, Cys-671, and His-675 each contribute to the Zn(2+) site.

It belongs to the class-II aminoacyl-tRNA synthetase family. As to quaternary structure, homotetramer. Zn(2+) serves as cofactor.

Its subcellular location is the cytoplasm. The enzyme catalyses tRNA(Ala) + L-alanine + ATP = L-alanyl-tRNA(Ala) + AMP + diphosphate. In terms of biological role, catalyzes the attachment of alanine to tRNA(Ala) in a two-step reaction: alanine is first activated by ATP to form Ala-AMP and then transferred to the acceptor end of tRNA(Ala). Also edits incorrectly charged Ser-tRNA(Ala) and Gly-tRNA(Ala) via its editing domain. This is Alanine--tRNA ligase from Buchnera aphidicola subsp. Baizongia pistaciae (strain Bp).